We begin with the raw amino-acid sequence, 136 residues long: UPF0216 protein PYRAB16100 (136 aa).

It belongs to the UPF0216 family.

This Pyrococcus abyssi (strain GE5 / Orsay) protein is UPF0216 protein PYRAB16100.